Here is a 493-residue protein sequence, read N- to C-terminus: Serine/threonine-protein kinase chk-1 (493 aa).

A Protein kinase domain is found at 26–286 (YRVIRTLGEG…IEQIKTDPWF (261 aa)). ATP-binding positions include 32–40 (LGEGAFGEV) and K56. D150 (proton acceptor) is an active-site residue. A disordered region spans residues 308–348 (DENSPDCNISSTQQADAVSTAKRRHLETPDKVAHVERQNAS). Residues 312-324 (PDCNISSTQQADA) are compositionally biased toward polar residues. Over residues 333-344 (LETPDKVAHVER) the composition is skewed to basic and acidic residues.

The protein belongs to the protein kinase superfamily. CAMK Ser/Thr protein kinase family. NIM1 subfamily.

The protein resides in the cytoplasm. The protein localises to the nucleus. It carries out the reaction L-seryl-[protein] + ATP = O-phospho-L-seryl-[protein] + ADP + H(+). The enzyme catalyses L-threonyl-[protein] + ATP = O-phospho-L-threonyl-[protein] + ADP + H(+). Its function is as follows. Serine/threonine-protein kinase which is required for checkpoint-mediated cell cycle arrest and activation of DNA repair in response to the presence of DNA damage or unreplicated DNA. May also negatively regulate cell cycle progression during unperturbed cell cycles. Required for checkpoint mediated cell cycle arrest in response to DNA damage in germline cells. Essential for embryogenesis. In Caenorhabditis briggsae, this protein is Serine/threonine-protein kinase chk-1 (chk-1).